Here is a 251-residue protein sequence, read N- to C-terminus: 5-oxoprolinase subunit A 2 (251 aa).

Belongs to the LamB/PxpA family. As to quaternary structure, forms a complex composed of PxpA, PxpB and PxpC.

The catalysed reaction is 5-oxo-L-proline + ATP + 2 H2O = L-glutamate + ADP + phosphate + H(+). Its function is as follows. Catalyzes the cleavage of 5-oxoproline to form L-glutamate coupled to the hydrolysis of ATP to ADP and inorganic phosphate. The sequence is that of 5-oxoprolinase subunit A 2 from Pseudomonas syringae pv. tomato (strain ATCC BAA-871 / DC3000).